Reading from the N-terminus, the 258-residue chain is Imidazole glycerol phosphate synthase subunit HisF (258 aa).

Residues Asp-12 and Asp-131 contribute to the active site.

This sequence belongs to the HisA/HisF family. In terms of assembly, heterodimer of HisH and HisF.

The protein localises to the cytoplasm. It carries out the reaction 5-[(5-phospho-1-deoxy-D-ribulos-1-ylimino)methylamino]-1-(5-phospho-beta-D-ribosyl)imidazole-4-carboxamide + L-glutamine = D-erythro-1-(imidazol-4-yl)glycerol 3-phosphate + 5-amino-1-(5-phospho-beta-D-ribosyl)imidazole-4-carboxamide + L-glutamate + H(+). The protein operates within amino-acid biosynthesis; L-histidine biosynthesis; L-histidine from 5-phospho-alpha-D-ribose 1-diphosphate: step 5/9. IGPS catalyzes the conversion of PRFAR and glutamine to IGP, AICAR and glutamate. The HisF subunit catalyzes the cyclization activity that produces IGP and AICAR from PRFAR using the ammonia provided by the HisH subunit. The chain is Imidazole glycerol phosphate synthase subunit HisF from Nitrosomonas europaea (strain ATCC 19718 / CIP 103999 / KCTC 2705 / NBRC 14298).